A 130-amino-acid chain; its full sequence is MSSNSDNTECFGGVNYAEGMRKRKRNPVRNSTFQEYLDARNARYPRSGSTSDSDEDYTTRSKYESDVSEFKKMMDLETLPPPKAEPQAQKAEPDAAKEEPVSTTSYILNEWVAPMIGHFLAMCMYELLFK.

A disordered region spans residues 1 to 100 (MSSNSDNTEC…AEPDAAKEEP (100 aa)). Basic and acidic residues-rich tracts occupy residues 57–75 (YTTR…KMMD) and 91–100 (AEPDAAKEEP).

This is an uncharacterized protein from Equine herpesvirus 1 (strain Ab4p) (EHV-1).